Here is a 437-residue protein sequence, read N- to C-terminus: Trigger factor (437 aa).

Positions 161 to 246 (DDQVNIDFVG…VNSVSAPVLP (86 aa)) constitute a PPIase FKBP-type domain.

The protein belongs to the FKBP-type PPIase family. Tig subfamily.

Its subcellular location is the cytoplasm. The enzyme catalyses [protein]-peptidylproline (omega=180) = [protein]-peptidylproline (omega=0). Its function is as follows. Involved in protein export. Acts as a chaperone by maintaining the newly synthesized protein in an open conformation. Functions as a peptidyl-prolyl cis-trans isomerase. In Pseudomonas putida (strain GB-1), this protein is Trigger factor.